The primary structure comprises 490 residues: Polyamine transporter RMV1 (490 aa).

A compositionally biased stretch (polar residues) spans 1 to 21; it reads MTELSSPNLDSASQKPRISTE. The interval 1–38 is disordered; sequence MTELSSPNLDSASQKPRISTENPPPPPPHISIGVTTGD. The next 12 helical transmembrane spans lie at 53–73, 83–103, 116–136, 160–180, 188–208, 231–248, 273–293, 303–323, 363–383, 386–406, 425–445, and 448–468; these read ITVL…PFGI, LLAI…EALI, GYVV…QGWV, IPIL…TVAL, LSIV…PFVV, GVNW…LNYW, LLLV…AIAL, FADI…QAAA, TPWV…WLSF, IVAA…ITFV, VLGS…IMAF, and LKVA…QPCL.

Belongs to the amino acid-polyamine-organocation (APC) superfamily. Polyamine:cation symporter (PHS) (TC 2.A.3.12) family.

The protein resides in the cell membrane. Cell membrane polyamine/proton symporter involved in the polyamine uptake in cells. Possesses high affinity for spermine and spermidine and lower affinity for putrescine. Transports paraquat, a polyamine analog, and thus confers sensitivity to this chemical which is used as a herbicide. In Arabidopsis thaliana (Mouse-ear cress), this protein is Polyamine transporter RMV1 (RMV1).